Here is a 727-residue protein sequence, read N- to C-terminus: MAFQKAVKGTILVGGGALATVLGLSQFAHYRRKQMNLAYVKAADCISEPVNREPPSREAQLLTLQNTSEFDILVIGGGATGSGCALDAVTRGLKTALVERDDFSSGTSSRSTKLIHGGVRYLQKAIMKLDIEQYRMVKEALHERANLLEIAPHLSAPLPIMLPVYKWWQLPYYWVGIKLYDLVAGSNCLKSSYVLSKSRALEHFPMLQKDKLVGAIVYYDGQHNDARMNLAIALTAARYGAATANYMEVVSLLKKTDPQTGKVRVSGARCKDVLTGQEFDVRAKCVINATGPFTDSVRKMDDKDAAAICQPSAGVHIVMPGYYSPESMGLLDPATSDGRVIFFLPWQKMTIAGTTDTPTDVTHHPIPSEEDINFILNEVRNYLSCDVEVRRGDVLAAWSGIRPLVTDPKSADTQSISRNHVVDISESGLITIAGGKWTTYRSMAEDTINAAVKTHNLKAGPSRTVGLFLQGGKDWSPTLYIRLVQDYGLESEVAQHLAATYGDKAFEVAKMASVTGKRWPIVGVRLVSEFPYIEAEVKYGIKEYACTAVDMISRRTRLAFLNVQAAEEALPRIVELMGRELNWDDYKKQEQLETARKFLYYEMGYKSRSEQLTDRSEISLLPSDIDRYKKRFHKFDADQKGFITIVDVQRVLESINVQMDENTLHEILNEVDLNKNGQVELNEFLQLMSAIQKGRVSGSRLAILMKTAEENLDRRVPIPVDRSCGGL.

Residues 1–42 (MAFQKAVKGTILVGGGALATVLGLSQFAHYRRKQMNLAYVKA) constitute a mitochondrion transit peptide. Position 71 to 99 (71 to 99 (DILVIGGGATGSGCALDAVTRGLKTALVE)) interacts with FAD. Tyr601 is modified (phosphotyrosine). 2 consecutive EF-hand domains span residues 623–658 (SDID…INVQ) and 659–694 (MDEN…IQKG). Ca(2+) contacts are provided by Asp672, Asn674, Asn676, Gln678, and Glu683.

Belongs to the FAD-dependent glycerol-3-phosphate dehydrogenase family. FAD is required as a cofactor.

The protein localises to the mitochondrion. The catalysed reaction is a quinone + sn-glycerol 3-phosphate = dihydroxyacetone phosphate + a quinol. It functions in the pathway polyol metabolism; glycerol degradation via glycerol kinase pathway; glycerone phosphate from sn-glycerol 3-phosphate (anaerobic route): step 1/1. Calcium-binding enhance the activity of the enzyme. Calcium-responsive mitochondrial glycerol-3-phosphate dehydrogenase which seems to be a key component of the pancreatic beta-cell glucose-sensing device. The protein is Glycerol-3-phosphate dehydrogenase, mitochondrial of Homo sapiens (Human).